We begin with the raw amino-acid sequence, 24 residues long: GFRDVLKGAAKQFVKTVAGHIANI.

As to expression, expressed by the skin glands.

It localises to the secreted. Functionally, antimicrobial peptide that shows higher potency against Gram-negative bacteria than against Gram-positive bacteria. Has a very week hemolytic activity. In Ascaphus truei (Coastal tailed frog), this protein is Ascaphin-2.